The primary structure comprises 1523 residues: MDRLCGSGELGSKFWDSNLSIYTNTPDLTPCFQNSLLAWVPCIYLWAALPCYLFYLRHHQLGYIVLSWLSRLKTALGVLLWCVSWVDLFYSFHGLIHGSSPAPVFFVTPLVVGITMLLATLLIQYERLRGVQSSGVLIIFWLLCVICAIIPFRSKILSALAEGKILDPFRFTTFYIYFALVFCALILSCFKEKPPLFSPENLDTNPCPEASAGFFSRLSFWWFTRLAILGYRRPLEDRDLWSLSEEDCSHKVVQRLLEAWQKQQNQASRSQTATAEPKIPGEDAVLLKPRPKSKQPSFLRALVRTFTSSLLMSACFNLIQNLLGFVNPQLLSILIRFISDPTAPTWWGFLLAGLMFLSSTMQTLILHQYYHCIFVMALRLRTAIIGVIYRKALVITNSVKRESTVGEMVNLMSVDAQRFMDVSPFINLLWSAPLQVILAIYFLWQILGPSALAGVAVIVLLIPLNGAVSMKMKTYQVKQMKFKDSRIKLMSEILNGIKVLKLYAWEPSFLEQVKGIRQSELQLLRKGAYLQAISTFIWICTPFLVTLITLGVYVYVDESNVLDAEKAFVSLSLFNILKIPLNMLPQLISGLTQASVSLKRIQDFLNQNELDPQCVERKTISPGYAITIHNGTFTWAQDLPPTLHSLNIQIPKGALVAVVGPVGCGKSSLVSALLGEMEKLEGVVSVKGSVAYVPQQAWIQNCTLQENVLFGQPMNPKRYQQALETCALLADLDVLPGGDQTEIGEKGINLSGGQRQRVSLARAVYSDANIFLLDDPLSAVDSHVAKHIFDQVIGPEGVLAGKTRVLVTHGISFLPQTDFIIVLAGGQVSEMGHYSALLQHDGSFANFLRNYAPDEDQEDHEAALQNANEEVLLLEDTLSTHTDLTDNEPAIYEVRKQFMREMSSLSSEGEVQNRTMPKKHTNSLEKEALVTKTKETGALIKEEIAETGNVKLSVYWDYAKSMGLCTTLSICLLYGGQSAAAIGANVWLSAWSNDAEEHGQQNKTSVRLGVYAALGILQGLLVMLSAFTMVVGAIQAARLLHEALLHNKIRSPQSFFDTTPSGRILNRFSKDIYVIDEVLAPTILMLLNSFFTSISTIMVIVASTPLFMVVVLPLAVLYGFVQRFYVATSRQLKRLESISRSPIFSHFSETVTGTSVIRAYGRIQDFKVLSDTKVDNNQKSSYPYIASNRWLGVHVEFVGNCVVLFAALFAVIGRNSLNPGLVGLSVSYALQVTMALNWMIRMISDLESNIIAVERVKEYSKTKTEAPWVVESNRAPEGWPTRGMVEFRNYSVRYRPGLELVLKNVTVHVQGGEKVGIVGRTGAGKSSMTLCLFRILEAAEGEIVIDGLNVAHIGLHDLRSQLTIIPQDPILFSGTLRMNLDPFGRYSEEDIWRALELSHLNTFVSSQPAGLDFQCAEGGDNLSVGQRQLVCLARALLRKSRVLVLDEATAAIDLETDDLIQGTIRTQFEDCTVLTIAHRLNTIMDYNRVLVLDKGVVAEFDSPVNLIAAGGIFYGMAKDAGLA.

The Extracellular segment spans residues 1–35 (MDRLCGSGELGSKFWDSNLSIYTNTPDLTPCFQNS). N-linked (GlcNAc...) asparagine glycosylation is present at asparagine 18. A helical membrane pass occupies residues 36–56 (LLAWVPCIYLWAALPCYLFYL). Residues 57 to 75 (RHHQLGYIVLSWLSRLKTA) are Cytoplasmic-facing. The helical transmembrane segment at 76 to 96 (LGVLLWCVSWVDLFYSFHGLI) threads the bilayer. The Extracellular portion of the chain corresponds to 97–102 (HGSSPA). Residues 103-123 (PVFFVTPLVVGITMLLATLLI) form a helical membrane-spanning segment. Over 124–129 (QYERLR) the chain is Cytoplasmic. A helical transmembrane segment spans residues 130–150 (GVQSSGVLIIFWLLCVICAII). Residues 151-170 (PFRSKILSALAEGKILDPFR) are Extracellular-facing. The helical transmembrane segment at 171-191 (FTTFYIYFALVFCALILSCFK) threads the bilayer. Residues 192–301 (EKPPLFSPEN…KSKQPSFLRA (110 aa)) lie on the Cytoplasmic side of the membrane. The chain crosses the membrane as a helical span at residues 302 to 324 (LVRTFTSSLLMSACFNLIQNLLG). The ABC transmembrane type-1 1 domain occupies 310 to 593 (LLMSACFNLI…LPQLISGLTQ (284 aa)). Over 325–345 (FVNPQLLSILIRFISDPTAPT) the chain is Extracellular. A helical membrane pass occupies residues 346-366 (WWGFLLAGLMFLSSTMQTLIL). Topologically, residues 367 to 419 (HQYYHCIFVMALRLRTAIIGVIYRKALVITNSVKRESTVGEMVNLMSVDAQRF) are cytoplasmic. Residues 420 to 440 (MDVSPFINLLWSAPLQVILAI) traverse the membrane as a helical segment. Tyrosine 441 is a topological domain (extracellular). The helical transmembrane segment at 442–462 (FLWQILGPSALAGVAVIVLLI) threads the bilayer. The Cytoplasmic segment spans residues 463–535 (PLNGAVSMKM…KGAYLQAIST (73 aa)). A helical membrane pass occupies residues 536–556 (FIWICTPFLVTLITLGVYVYV). At 557-567 (DESNVLDAEKA) the chain is on the extracellular side. A helical transmembrane segment spans residues 568–588 (FVSLSLFNILKIPLNMLPQLI). Residues 589–967 (SGLTQASVSL…YAKSMGLCTT (379 aa)) lie on the Cytoplasmic side of the membrane. The region spanning 626-850 (ITIHNGTFTW…DGSFANFLRN (225 aa)) is the ABC transporter 1 domain. 660–667 (GPVGCGKS) serves as a coordination point for ATP. Phosphoserine is present on residues serine 903 and serine 906. Residues 903 to 915 (SSLSSEGEVQNRT) are compositionally biased toward polar residues. The segment at 903 to 923 (SSLSSEGEVQNRTMPKKHTNS) is disordered. Residues 967 to 1248 (TLSICLLYGG…MIRMISDLES (282 aa)) enclose the ABC transmembrane type-1 2 domain. The helical transmembrane segment at 968-988 (LSICLLYGGQSAAAIGANVWL) threads the bilayer. Over 989 to 1013 (SAWSNDAEEHGQQNKTSVRLGVYAA) the chain is Extracellular. N-linked (GlcNAc...) asparagine glycosylation is present at asparagine 1002. Residues 1014–1034 (LGILQGLLVMLSAFTMVVGAI) form a helical membrane-spanning segment. Topologically, residues 1035 to 1071 (QAARLLHEALLHNKIRSPQSFFDTTPSGRILNRFSKD) are cytoplasmic. Residues 1072–1092 (IYVIDEVLAPTILMLLNSFFT) traverse the membrane as a helical segment. Over 1093–1096 (SIST) the chain is Extracellular. Residues 1097 to 1117 (IMVIVASTPLFMVVVLPLAVL) form a helical membrane-spanning segment. Residues 1118 to 1191 (YGFVQRFYVA…YPYIASNRWL (74 aa)) are Cytoplasmic-facing. Residues 1192-1212 (GVHVEFVGNCVVLFAALFAVI) form a helical membrane-spanning segment. The Extracellular portion of the chain corresponds to 1213-1219 (GRNSLNP). Residues 1220–1240 (GLVGLSVSYALQVTMALNWMI) traverse the membrane as a helical segment. At 1241 to 1523 (RMISDLESNI…YGMAKDAGLA (283 aa)) the chain is on the cytoplasmic side. An ABC transporter 2 domain is found at 1287-1519 (FRNYSVRYRP…GGIFYGMAKD (233 aa)). ATP is bound at residue 1319–1326 (GRTGAGKS).

It belongs to the ABC transporter superfamily. ABCC family. Conjugate transporter (TC 3.A.1.208) subfamily. Detected throughout the gastrointestinal tract, liver, lung, pancreas, bladder, gall bladder and at low levels in the adrenal gland.

The protein localises to the basolateral cell membrane. The protein resides in the basal cell membrane. The catalysed reaction is an S-substituted glutathione(in) + ATP + H2O = an S-substituted glutathione(out) + ADP + phosphate + H(+). It catalyses the reaction ATP + H2O + xenobioticSide 1 = ADP + phosphate + xenobioticSide 2.. It carries out the reaction 17beta-estradiol 17-O-(beta-D-glucuronate)(in) + ATP + H2O = 17beta-estradiol 17-O-(beta-D-glucuronate)(out) + ADP + phosphate + H(+). The enzyme catalyses dehydroepiandrosterone 3-sulfate(in) + ATP + H2O = dehydroepiandrosterone 3-sulfate(out) + ADP + phosphate + H(+). The catalysed reaction is leukotriene C4(in) + ATP + H2O = leukotriene C4(out) + ADP + phosphate + H(+). It catalyses the reaction taurocholate(in) + ATP + H2O = taurocholate(out) + ADP + phosphate + H(+). It carries out the reaction glycocholate(in) + ATP + H2O = glycocholate(out) + ADP + phosphate + H(+). The enzyme catalyses taurolithocholate 3-sulfate(in) + ATP + H2O = taurolithocholate 3-sulfate(out) + ADP + phosphate + H(+). The catalysed reaction is taurochenodeoxycholate 3-sulfate(in) + ATP + H2O = taurochenodeoxycholate 3-sulfate(out) + ADP + phosphate + H(+). It catalyses the reaction (4Z,15Z)-bilirubin IXalpha C8-beta-D-glucuronoside(in) + ATP + H2O = (4Z,15Z)-bilirubin IXalpha C8-beta-D-glucuronoside(out) + ADP + phosphate + H(+). It carries out the reaction (4Z,15Z)-bilirubin IXalpha C8,C12-beta-D-bisglucuronoside(in) + ATP + H2O = (4Z,15Z)-bilirubin IXalpha C8,C12-beta-D-bisglucuronoside(out) + ADP + phosphate + H(+). Its function is as follows. ATP-dependent transporter of the ATP-binding cassette (ABC) family that binds and hydrolyzes ATP to enable active transport of various substrates including many drugs, toxicants and endogenous compound across cell membranes. Transports glucuronide conjugates such as bilirubin diglucuronide, estradiol-17-beta-o-glucuronide and GSH conjugates such as leukotriene C4 (LTC4). Transports also various bile salts (taurocholate, glycocholate, taurochenodeoxycholate-3-sulfate, taurolithocholate- 3-sulfate). Does not contribute substantially to bile salt physiology but provides an alternative route for the export of bile acids and glucuronides from cholestatic hepatocytes. May contribute to regulate the transport of organic compounds in testes across the blood-testis-barrier. The chain is ATP-binding cassette sub-family C member 3 (Abcc3) from Mus musculus (Mouse).